Consider the following 535-residue polypeptide: MAGDQLNVLNALDVAKTQWYHFTAIIIAGMGFFTDAYDLFCISLVTKLLGRIYYHVDGSEKPGTLPPNVSAAVNGVAFCGTLAGQLFFGWLGDKLGRKKVYGMTLMVMVLCSIASGLSFGSNPKTVMTTLCFFRFWLGFGIGGDYPLSATIMSEYANKKTRGAFIAAVFAMQGFGILTGGIFAIIVSAAFEAKFPAPTYQIDALASTVPQADYVWRIILMVGALPAAMTYYSRSKMPETARYTALVAKDAKLAASNMSKVLQVEIEAEQQGTEDKSNSFGLFSKEFMKRHGLHLLGTTSTWFLLDIAFYSQNLFQKDIFSAIGWIPPAQTMNAIQEVFKIARAQTLIALCSTVPGYWFTVAFIDVIGRFAIQMMGFFFMTVFMFALAIPYDHWTHKENRIGFVAMYSLTFFFANFGPNATTFVVPAEIFPARFRSTCHGISAASGKLGAMVGAFGFLYLAQSPDKTKTEHGYPPGIGVKNSLIVLGVVNLLGMVFTLLVPESKGKSLEEMSGENEQNDESSSSSNNNSNNAVSTA.

Residues 1-24 (MAGDQLNVLNALDVAKTQWYHFTA) are Cytoplasmic-facing. Residues 25 to 45 (IIIAGMGFFTDAYDLFCISLV) form a helical membrane-spanning segment. Topologically, residues 46-70 (TKLLGRIYYHVDGSEKPGTLPPNVS) are extracellular. The helical transmembrane segment at 71-91 (AAVNGVAFCGTLAGQLFFGWL) threads the bilayer. The Cytoplasmic portion of the chain corresponds to 92–99 (GDKLGRKK). A helical membrane pass occupies residues 100-120 (VYGMTLMVMVLCSIASGLSFG). Residues 121–131 (SNPKTVMTTLC) are Extracellular-facing. A helical transmembrane segment spans residues 132–152 (FFRFWLGFGIGGDYPLSATIM). Residues 153–161 (SEYANKKTR) lie on the Cytoplasmic side of the membrane. Residues 162 to 182 (GAFIAAVFAMQGFGILTGGIF) traverse the membrane as a helical segment. Residues 183–211 (AIIVSAAFEAKFPAPTYQIDALASTVPQA) are Extracellular-facing. A helical transmembrane segment spans residues 212 to 232 (DYVWRIILMVGALPAAMTYYS). At 233 to 289 (RSKMPETARYTALVAKDAKLAASNMSKVLQVEIEAEQQGTEDKSNSFGLFSKEFMKR) the chain is on the cytoplasmic side. Residues 290–310 (HGLHLLGTTSTWFLLDIAFYS) traverse the membrane as a helical segment. Over 311 to 345 (QNLFQKDIFSAIGWIPPAQTMNAIQEVFKIARAQT) the chain is Extracellular. A helical membrane pass occupies residues 346–366 (LIALCSTVPGYWFTVAFIDVI). At 367–368 (GR) the chain is on the cytoplasmic side. The helical transmembrane segment at 369–389 (FAIQMMGFFFMTVFMFALAIP) threads the bilayer. Residues 390–399 (YDHWTHKENR) are Extracellular-facing. Residues 400 to 420 (IGFVAMYSLTFFFANFGPNAT) traverse the membrane as a helical segment. The Cytoplasmic portion of the chain corresponds to 421–438 (TFVVPAEIFPARFRSTCH). A helical transmembrane segment spans residues 439–459 (GISAASGKLGAMVGAFGFLYL). Topologically, residues 460 to 480 (AQSPDKTKTEHGYPPGIGVKN) are extracellular. The chain crosses the membrane as a helical span at residues 481 to 501 (SLIVLGVVNLLGMVFTLLVPE). At 502-535 (SKGKSLEEMSGENEQNDESSSSSNNNSNNAVSTA) the chain is on the cytoplasmic side. The tract at residues 506–535 (SLEEMSGENEQNDESSSSSNNNSNNAVSTA) is disordered. Residues 519-535 (ESSSSSNNNSNNAVSTA) are compositionally biased toward low complexity. S520 bears the Phosphoserine mark.

Belongs to the major facilitator superfamily. Phosphate:H(+) symporter (TC 2.A.1.9) family. As to expression, mature pollen.

It localises to the membrane. In terms of biological role, high-affinity transporter for external inorganic phosphate. This is Probable inorganic phosphate transporter 1-7 (PHT1-7) from Arabidopsis thaliana (Mouse-ear cress).